The primary structure comprises 355 residues: Protein RecA (355 aa).

72 to 79 (GPESSGKT) is a binding site for ATP.

It belongs to the RecA family.

It localises to the cytoplasm. Functionally, can catalyze the hydrolysis of ATP in the presence of single-stranded DNA, the ATP-dependent uptake of single-stranded DNA by duplex DNA, and the ATP-dependent hybridization of homologous single-stranded DNAs. It interacts with LexA causing its activation and leading to its autocatalytic cleavage. In Thermosynechococcus vestitus (strain NIES-2133 / IAM M-273 / BP-1), this protein is Protein RecA.